Consider the following 262-residue polypeptide: uncharacterized protein (262 aa).

Positions 41 to 118 (ELQKNEKIDK…EEKAEDFINK (78 aa)) form a coiled coil.

This is an uncharacterized protein from Plasmodium falciparum (isolate 3D7).